The chain runs to 383 residues: Micronemal protein 3 (383 aa).

The signal sequence occupies residues 1–26; it reads MRGGTSALLHALTFSGAVWMCTPAEA. The propeptide at 27–66 is required for proper sorting to micronemes; it reads LPIQKSVQLGSFDKVVPSREVVSESLAPSFAVTETHSSVQ. The lectin-like; required for the binding of host cells stretch occupies residues 67-145; sequence SPSKQETQLC…HPDKSYGGDC (79 aa). 3 required for proper sorting to micronemes regions span residues 146–189, 190–236, and 237–290; these read SCEK…SEDP, CSKR…KRTG, and CHAF…LAEK. Residues 186–227 form the EGF-like domain; it reads SEDPCSKRGNAKCGPNGTCIVVDSVSYTCTCGDGETLVNLPE. 2 disulfides stabilise this stretch: cysteine 190/cysteine 204 and cysteine 198/cysteine 214. The N-linked (GlcNAc...) asparagine glycan is linked to asparagine 201. Residues 294 to 359 are involved in dimerization; sequence EFGISASSCK…HTVTCEKIKH (66 aa).

In terms of assembly, homodimer; dimerization is likely required for host cell binding but not for trafficking to micronemes. In terms of processing, removal of the propeptide occurs in a post-medial-Golgi compartment. Removal of the propeptide is required for the host cell binding. The presence of propeptide does not affect dimerization. The presence of propeptide does not affect sorting to micronemes.

The protein resides in the cytoplasmic vesicle. It is found in the secretory vesicle. The protein localises to the microneme. Its subcellular location is the secreted. It localises to the golgi apparatus. The protein resides in the endoplasmic reticulum. Its function is as follows. Adhesin; can bind both the host cells and the parasites. May be involved in parasite invasion by acting as a bridge between the parasite and the host cell. Triggers innate immune responses in mouse macrophages via the TLR11/MyD88/NF-kappa-B pathway. Induces TNF/TNF-alpha secretion in mouse macrophages. Induces secretion of IL6 in mouse and human macrophages likely via different mechanisms. Up-regulates expression of NOS2/iNOS in mouse macrophages. Induces mouse macrophage polarization. The chain is Micronemal protein 3 from Toxoplasma gondii.